The primary structure comprises 102 residues: MAKQKVRIRLKAYDHKILDQSARQIVEAAERTGALVAGPVPLPTKIERYSVIRSGFIDKDSQEQFEIRTHKRLIDVLDPSQQTINALMKLNLPAGVDIEIKL.

Belongs to the universal ribosomal protein uS10 family. Part of the 30S ribosomal subunit.

Its function is as follows. Involved in the binding of tRNA to the ribosomes. The polypeptide is Small ribosomal subunit protein uS10 (Chloroflexus aurantiacus (strain ATCC 29366 / DSM 635 / J-10-fl)).